Here is a 144-residue protein sequence, read N- to C-terminus: 3-hydroxyacyl-[acyl-carrier-protein] dehydratase FabZ (144 aa).

Residue His47 is part of the active site.

Belongs to the thioester dehydratase family. FabZ subfamily.

It is found in the cytoplasm. The catalysed reaction is a (3R)-hydroxyacyl-[ACP] = a (2E)-enoyl-[ACP] + H2O. Its function is as follows. Involved in unsaturated fatty acids biosynthesis. Catalyzes the dehydration of short chain beta-hydroxyacyl-ACPs and long chain saturated and unsaturated beta-hydroxyacyl-ACPs. This Alcanivorax borkumensis (strain ATCC 700651 / DSM 11573 / NCIMB 13689 / SK2) protein is 3-hydroxyacyl-[acyl-carrier-protein] dehydratase FabZ.